We begin with the raw amino-acid sequence, 187 residues long: UPF0301 protein HSM_1900 (187 aa).

The protein belongs to the UPF0301 (AlgH) family.

The sequence is that of UPF0301 protein HSM_1900 from Histophilus somni (strain 2336) (Haemophilus somnus).